A 336-amino-acid chain; its full sequence is N-lysine methyltransferase KMT5A (336 aa).

Residues 1–112 (MGRGKKMSKP…KPSEQRETEC (112 aa)) form a disordered region. Basic and acidic residues predominate over residues 67–93 (SVAHHESKCPGKPLTETRKKAEVEKKR). The SET domain occupies 200–321 (EGMKMDMITG…VGEELLYDYG (122 aa)). Residues 210-212 (KGR), Tyr255, and 282-283 (NH) contribute to the S-adenosyl-L-methionine site.

Belongs to the class V-like SAM-binding methyltransferase superfamily. Histone-lysine methyltransferase family. PR/SET subfamily.

Its subcellular location is the nucleus. The protein localises to the chromosome. It catalyses the reaction L-lysyl(20)-[histone H4] + S-adenosyl-L-methionine = N(6)-methyl-L-lysyl(20)-[histone H4] + S-adenosyl-L-homocysteine + H(+). It carries out the reaction L-lysyl-[protein] + S-adenosyl-L-methionine = N(6)-methyl-L-lysyl-[protein] + S-adenosyl-L-homocysteine + H(+). Its function is as follows. Protein-lysine N-methyltransferase that monomethylates both histones and non-histone proteins. Specifically monomethylates 'Lys-20' of histone H4 (H4K20me1). H4K20me1 is enriched during mitosis and represents a specific tag for epigenetic transcriptional repression. Mainly functions in euchromatin regions, thereby playing a central role in the silencing of euchromatic genes. Required for cell proliferation, probably by contributing to the maintenance of proper higher-order structure of DNA during mitosis. Involved in chromosome condensation and proper cytokinesis. Nucleosomes are preferred as substrate compared to free histones. Mediates monomethylation of p53/TP53 at 'Lys-382', leading to repress p53/TP53-target genes. Plays a negative role in TGF-beta response regulation and a positive role in cell migration. The chain is N-lysine methyltransferase KMT5A from Xenopus tropicalis (Western clawed frog).